Consider the following 105-residue polypeptide: Nitrogen fixation nifHD region GlnB-like protein 1 (105 aa).

This sequence belongs to the P(II) protein family.

Functionally, could be involved in the regulation of nitrogen fixation. This is Nitrogen fixation nifHD region GlnB-like protein 1 (glnBA) from Methanobacterium ivanovii.